A 270-amino-acid polypeptide reads, in one-letter code: Formamidopyrimidine-DNA glycosylase (270 aa).

Proline 2 functions as the Schiff-base intermediate with DNA in the catalytic mechanism. Glutamate 3 acts as the Proton donor in catalysis. Lysine 57 (proton donor; for beta-elimination activity) is an active-site residue. Residues histidine 90, arginine 109, and lysine 150 each coordinate DNA. The segment at 235 to 269 (QIYGKKGCPCPKCGQKIESFTVGQRNSYVCLHCQK) adopts an FPG-type zinc-finger fold. The active-site Proton donor; for delta-elimination activity is arginine 259.

The protein belongs to the FPG family. Monomer. Zn(2+) is required as a cofactor.

It carries out the reaction Hydrolysis of DNA containing ring-opened 7-methylguanine residues, releasing 2,6-diamino-4-hydroxy-5-(N-methyl)formamidopyrimidine.. The catalysed reaction is 2'-deoxyribonucleotide-(2'-deoxyribose 5'-phosphate)-2'-deoxyribonucleotide-DNA = a 3'-end 2'-deoxyribonucleotide-(2,3-dehydro-2,3-deoxyribose 5'-phosphate)-DNA + a 5'-end 5'-phospho-2'-deoxyribonucleoside-DNA + H(+). Its function is as follows. Involved in base excision repair of DNA damaged by oxidation or by mutagenic agents. Acts as a DNA glycosylase that recognizes and removes damaged bases. Has a preference for oxidized purines, such as 7,8-dihydro-8-oxoguanine (8-oxoG). Has AP (apurinic/apyrimidinic) lyase activity and introduces nicks in the DNA strand. Cleaves the DNA backbone by beta-delta elimination to generate a single-strand break at the site of the removed base with both 3'- and 5'-phosphates. The chain is Formamidopyrimidine-DNA glycosylase from Actinobacillus succinogenes (strain ATCC 55618 / DSM 22257 / CCUG 43843 / 130Z).